The primary structure comprises 256 residues: Small ribosomal subunit protein eS1 (256 aa).

Alanine 2 carries the N-acetylalanine; partial modification.

This sequence belongs to the eukaryotic ribosomal protein eS1 family. In terms of assembly, component of the small ribosomal subunit. Mature ribosomes consist of a small (40S) and a large (60S) subunit. The 40S subunit contains about 33 different proteins and 1 molecule of RNA (18S). The 60S subunit contains about 49 different proteins and 3 molecules of RNA (25S, 5.8S and 5S).

The protein resides in the cytoplasm. The chain is Small ribosomal subunit protein eS1 from Coprinopsis cinerea (strain Okayama-7 / 130 / ATCC MYA-4618 / FGSC 9003) (Inky cap fungus).